The following is a 505-amino-acid chain: Annexin A11 (505 aa).

Composition is skewed to pro residues over residues 1–17 (MSYP…PPAA) and 99–160 (PVPP…PVPL). Disordered stretches follow at residues 1–38 (MSYP…PPIG) and 84–199 (PVPP…DAPG). Over residues 161 to 177 (PGQQQPVPSYPGYPGSG) the composition is skewed to low complexity. 4 Annexin repeats span residues 200–271 (FDPL…ALMK), 272–343 (TPVL…SLSQ), 355–427 (SLAQ…AVVK), and 431–502 (NTPA…KICG). 2 positions are modified to N6-acetyllysine: lysine 248 and lysine 255. An N6-acetyllysine modification is found at lysine 479.

It belongs to the annexin family. As to quaternary structure, interacts with S100A6. Interacts with PDCD6 in a calcium-dependent manner. Interacts with KIF23 during cytokinesis.

The protein resides in the cytoplasm. Its subcellular location is the melanosome. It localises to the nucleus envelope. The protein localises to the nucleus. It is found in the nucleoplasm. The protein resides in the cytoskeleton. Its subcellular location is the spindle. Its function is as follows. Binds specifically to calcyclin in a calcium-dependent manner. Required for midbody formation and completion of the terminal phase of cytokinesis. The sequence is that of Annexin A11 (ANXA11) from Homo sapiens (Human).